A 211-amino-acid polypeptide reads, in one-letter code: Cell division protein SepF (211 aa).

Residues 15–26 (DTDEVNEVEEEV) are compositionally biased toward acidic residues. Residues 15–111 (DTDEVNEVEE…ETYQAQTTVQ (97 aa)) are disordered. 3 stretches are compositionally biased toward polar residues: residues 44–57 (IPSQ…QNPA), 64–81 (ARSQ…PNRQ), and 91–111 (RESV…TTVQ).

Belongs to the SepF family. As to quaternary structure, homodimer. Interacts with FtsZ.

The protein localises to the cytoplasm. Its function is as follows. Cell division protein that is part of the divisome complex and is recruited early to the Z-ring. Probably stimulates Z-ring formation, perhaps through the cross-linking of FtsZ protofilaments. Its function overlaps with FtsA. The chain is Cell division protein SepF from Streptococcus uberis (strain ATCC BAA-854 / 0140J).